The chain runs to 161 residues: Nucleotide-binding protein amb3630 (161 aa).

This sequence belongs to the YajQ family.

Its function is as follows. Nucleotide-binding protein. The protein is Nucleotide-binding protein amb3630 of Paramagnetospirillum magneticum (strain ATCC 700264 / AMB-1) (Magnetospirillum magneticum).